A 233-amino-acid polypeptide reads, in one-letter code: Ion-translocating oxidoreductase complex subunit E (233 aa).

6 helical membrane passes run 18-38, 39-59, 69-89, 92-112, 128-148, and 182-202; these read ALVQ…ATNA, LGLG…VSAL, IPIY…LINA, FGLY…CIVI, ALDG…LGAL, and PFLL…LLAG.

It belongs to the NqrDE/RnfAE family. In terms of assembly, the complex is composed of six subunits: RnfA, RnfB, RnfC, RnfD, RnfE and RnfG.

The protein localises to the cell inner membrane. Functionally, part of a membrane-bound complex that couples electron transfer with translocation of ions across the membrane. The chain is Ion-translocating oxidoreductase complex subunit E from Yersinia pseudotuberculosis serotype O:1b (strain IP 31758).